The following is a 170-amino-acid chain: Ureidoglycolate lyase (170 aa).

Belongs to the ureidoglycolate lyase family. Homodimer. Ni(2+) serves as cofactor.

The catalysed reaction is (S)-ureidoglycolate = urea + glyoxylate. It participates in nitrogen metabolism; (S)-allantoin degradation. Its function is as follows. Catalyzes the catabolism of the allantoin degradation intermediate (S)-ureidoglycolate, generating urea and glyoxylate. Involved in the utilization of allantoin as nitrogen source. The sequence is that of Ureidoglycolate lyase from Pseudomonas syringae pv. tomato (strain ATCC BAA-871 / DC3000).